The primary structure comprises 273 residues: F-actin-capping protein subunit alpha (273 aa).

It belongs to the F-actin-capping protein alpha subunit family. Component of the F-actin capping complex, composed of a heterodimer of an alpha and a beta subunit.

Its subcellular location is the cytoplasm. It localises to the cytoskeleton. The protein localises to the actin patch. F-actin-capping proteins bind in a Ca(2+)-independent manner to the fast growing ends of actin filaments (barbed end) thereby blocking the exchange of subunits at these ends. Unlike other capping proteins (such as gelsolin and severin), these proteins do not sever actin filaments. In Neurospora crassa (strain ATCC 24698 / 74-OR23-1A / CBS 708.71 / DSM 1257 / FGSC 987), this protein is F-actin-capping protein subunit alpha (fac-1).